The following is a 316-amino-acid chain: Olfactory receptor 2T11 (316 aa).

Residues 1–22 are Extracellular-facing; that stretch reads MTNTSSSDFTLLGLLVNSEAAG. N-linked (GlcNAc...) asparagine glycosylation is present at asparagine 3. A helical membrane pass occupies residues 23-46; sequence IVFTVILAVFLGAVTANLVMIFLI. Residues 47 to 54 are Cytoplasmic-facing; sequence QVDSRLHT. A helical transmembrane segment spans residues 55-76; it reads PMYFLLSQLSIMDTLFICTTVP. Topologically, residues 77–97 are extracellular; it reads KLLADMVSKEKIISFVACGIQ. The cysteines at positions 94 and 186 are disulfide-linked. Residues 98–117 form a helical membrane-spanning segment; that stretch reads IFLYLTMIGSEFFLLGLMAY. Over 118–136 the chain is Cytoplasmic; the sequence is DCYVAVCNPLRYPVLMNRK. The helical transmembrane segment at 137–155 threads the bilayer; sequence KCLLLAAGAWFGGSLDGFL. Residues 156–192 lie on the Extracellular side of the membrane; sequence LTPITMNVPYCGSRSINHFFCEIPAVLKLACADTSLY. Residues 193–216 form a helical membrane-spanning segment; the sequence is ETLMYICCVLMLLIPISIISTSYS. Residues 217–233 lie on the Cytoplasmic side of the membrane; it reads LILLTIHRMPSAEGRKK. A helical membrane pass occupies residues 234–256; sequence AFTTCSSHLTVVSIFYGAAFYTY. Residues 257 to 269 lie on the Extracellular side of the membrane; sequence VLPQSFHTPEQDK. The helical transmembrane segment at 270-289 threads the bilayer; the sequence is VVSAFYTIVTPMLNPLIYSL. The Cytoplasmic portion of the chain corresponds to 290–316; sequence RNKDVIGAFKKVFACCSSAQKVATSDA.

It belongs to the G-protein coupled receptor 1 family.

It localises to the cell membrane. Functionally, odorant receptor. This Homo sapiens (Human) protein is Olfactory receptor 2T11 (OR2T11).